Consider the following 455-residue polypeptide: Chromosomal replication initiator protein DnaA (455 aa).

Residues 1-77 (MASLNENQKF…GFEVFGRMID (77 aa)) form a domain I, interacts with DnaA modulators region. The tract at residues 77–116 (DYELYANDELTELELHRLNNQSSIEEQPRSTAKPASPLVS) is domain II. Positions 117 to 333 (GLNEKYNFEN…GALNRVEFVA (217 aa)) are domain III, AAA+ region. ATP contacts are provided by G161, G163, K164, and T165. The domain IV, binds dsDNA stretch occupies residues 334 to 455 (RANGIAVVDI…KDIDSIKRKF (122 aa)).

Belongs to the DnaA family. As to quaternary structure, oligomerizes as a right-handed, spiral filament on DNA at oriC.

The protein localises to the cytoplasm. Functionally, plays an essential role in the initiation and regulation of chromosomal replication. ATP-DnaA binds to the origin of replication (oriC) to initiate formation of the DNA replication initiation complex once per cell cycle. Binds the DnaA box (a 9 base pair repeat at the origin) and separates the double-stranded (ds)DNA. Forms a right-handed helical filament on oriC DNA; dsDNA binds to the exterior of the filament while single-stranded (ss)DNA is stabiized in the filament's interior. The ATP-DnaA-oriC complex binds and stabilizes one strand of the AT-rich DNA unwinding element (DUE), permitting loading of DNA polymerase. After initiation quickly degrades to an ADP-DnaA complex that is not apt for DNA replication. Binds acidic phospholipids. The protein is Chromosomal replication initiator protein DnaA of Lactococcus lactis subsp. lactis (strain IL1403) (Streptococcus lactis).